Consider the following 146-residue polypeptide: Arginine repressor (146 aa).

It belongs to the ArgR family.

Its subcellular location is the cytoplasm. It functions in the pathway amino-acid biosynthesis; L-arginine biosynthesis [regulation]. Functionally, regulates arginine biosynthesis genes. The polypeptide is Arginine repressor (Parabacteroides distasonis (strain ATCC 8503 / DSM 20701 / CIP 104284 / JCM 5825 / NCTC 11152)).